A 297-amino-acid polypeptide reads, in one-letter code: Nuclear transcription factor Y subunit B-11 (297 aa).

The interval 1-25 (MKSRKSYGHLLSPVGSPPLDNESGE) is disordered. A DNA-binding region spans residues 63–69 (LPIANVS). Residues 90 to 101 (VQECVSEFISFV) form a subunit association domain (SAD) region.

It belongs to the NFYB/HAP3 subunit family. In terms of assembly, heterotrimeric transcription factor composed of three components, NF-YA, NF-YB and NF-YC. NF-YB and NF-YC must interact and dimerize for NF-YA association and DNA binding. Interacts with NFYC2, NFYC4 and NFYC6. In terms of tissue distribution, expressed in roots, culms, nodes, leaf blades, leaf sheaths and young panicles.

It is found in the nucleus. It localises to the cytoplasm. Functionally, probable transcription factor involved in the regulation of flowering time under long day (LD) conditions. Functions as a repressor of flowering, independently of HD1 and GHD7. Controls flowering time by negatively regulating the expression of EHD1 and HD3A. Regulates plant height by promoting cell elongation in the internodes. Component of the NF-Y/HAP transcription factor complex. In Oryza sativa subsp. japonica (Rice), this protein is Nuclear transcription factor Y subunit B-11 (HD5).